A 716-amino-acid polypeptide reads, in one-letter code: Zinc finger CCCH domain-containing protein 30 (716 aa).

2 ANK repeats span residues 90-120 (DYRT…DVNR) and 125-157 (DQTT…DLNL). Residues 201–231 (VTNVPNRSSSPCHSPTGENGGSGSGSPLGSP) are disordered. The segment covering 203-213 (NVPNRSSSPCH) has biased composition (polar residues). C3H1-type zinc fingers lie at residues 306 to 328 (PCPD…HGVF) and 336 to 360 (QYRT…HTPE). A disordered region spans residues 521–562 (FQQQQQQQQSMLSPINTSFSSPKSVDHSLFSGGGRMSPRNVV). The segment covering 530-543 (SMLSPINTSFSSPK) has biased composition (polar residues). The residue at position 566 (S566) is a Phosphoserine. Residues 583–594 (QQQQQQQQQQHQ) are compositionally biased toward low complexity. Disordered regions lie at residues 583 to 638 (QQQQ…MSSE) and 667 to 692 (PAEA…PVEP). Residues 605–630 (TNSSPIVGSPVNNNTWSSKWGSSNGQ) are compositionally biased toward polar residues.

This Arabidopsis thaliana (Mouse-ear cress) protein is Zinc finger CCCH domain-containing protein 30.